Reading from the N-terminus, the 118-residue chain is V-type proton ATPase subunit G 3 (118 aa).

The span at 1–12 (MTSQSQGIQQLL) shows a compositional bias: polar residues. Positions 1-44 (MTSQSQGIQQLLQAEKRAKDKLDEAKKRKGKRLRQAKEEAVAET) are disordered. Positions 5–53 (SQGIQQLLQAEKRAKDKLDEAKKRKGKRLRQAKEEAVAETDQYRMQMEK) form a coiled coil. The span at 14–26 (AEKRAKDKLDEAK) shows a compositional bias: basic and acidic residues.

Belongs to the V-ATPase G subunit family. In terms of assembly, V-ATPase is a heteromultimeric enzyme made up of two complexes: the ATP-hydrolytic V1 complex and the proton translocation V0 complex. The V1 complex consists of three catalytic AB heterodimers that form a heterohexamer, three peripheral stalks each consisting of EG heterodimers, one central rotor including subunits D and F, and the regulatory subunits C and H. The proton translocation complex V0 consists of the proton transport subunit a, a ring of proteolipid subunits c9c'', rotary subunit d, subunits e and f, and the accessory subunits ATP6AP1/Ac45 and ATP6AP2/PRR. Kidney.

Functionally, subunit of the V1 complex of vacuolar(H+)-ATPase (V-ATPase), a multisubunit enzyme composed of a peripheral complex (V1) that hydrolyzes ATP and a membrane integral complex (V0) that translocates protons. V-ATPase is responsible for acidifying and maintaining the pH of intracellular compartments and in some cell types, is targeted to the plasma membrane, where it is responsible for acidifying the extracellular environment. This chain is V-type proton ATPase subunit G 3 (Atp6v1g3), found in Mus musculus (Mouse).